The following is a 145-amino-acid chain: Ribonuclease VapC48 (145 aa).

The Mg(2+) site is built by Asp-6 and Asp-109. The PINc domain occupies 15–141 (HRASPFHDKA…RKFEGIRIRD (127 aa)).

Belongs to the PINc/VapC protein family. The cofactor is Mg(2+).

Toxic component of a type II toxin-antitoxin (TA) system. An RNase. Its cognate antitoxin is VapB48. The sequence is that of Ribonuclease VapC48 from Mycobacterium tuberculosis (strain CDC 1551 / Oshkosh).